Reading from the N-terminus, the 143-residue chain is Small ribosomal subunit protein uS11c (143 aa).

It belongs to the universal ribosomal protein uS11 family. Part of the 30S ribosomal subunit.

The protein resides in the plastid. It is found in the chloroplast. The sequence is that of Small ribosomal subunit protein uS11c from Hordeum vulgare (Barley).